Consider the following 215-residue polypeptide: MKGVYFVSGIDTDIGKTVATGVLAKQLLQQGKSVITQKPVQTGCQNIADDIAVHRKIMGIPMQEADKRRLTMPEIFSYPASPHLAARLDGRALDLDKIRTATQELAAQYEVVLVEGAGGLMVPLTENLLTIDYIRQQGYPVILVTSGRLGSINHTLLSFAALKQYGIRLHSLVFNHIHDSRDAHIAQDSLSYLKCRLKADFSEAEWMELAKTDAV.

Residue 13–18 (DIGKTV) coordinates ATP. T17 is a binding site for Mg(2+). K38 is a catalytic residue. A substrate-binding site is contributed by T42. ATP is bound by residues D50, 115 to 118 (EGAG), and 175 to 176 (NH). Mg(2+) is bound by residues D50 and E115.

It belongs to the dethiobiotin synthetase family. In terms of assembly, homodimer. The cofactor is Mg(2+).

It localises to the cytoplasm. The catalysed reaction is (7R,8S)-7,8-diammoniononanoate + CO2 + ATP = (4R,5S)-dethiobiotin + ADP + phosphate + 3 H(+). Its pathway is cofactor biosynthesis; biotin biosynthesis; biotin from 7,8-diaminononanoate: step 1/2. In terms of biological role, catalyzes a mechanistically unusual reaction, the ATP-dependent insertion of CO2 between the N7 and N8 nitrogen atoms of 7,8-diaminopelargonic acid (DAPA, also called 7,8-diammoniononanoate) to form a ureido ring. The chain is ATP-dependent dethiobiotin synthetase BioD from Neisseria meningitidis serogroup B (strain ATCC BAA-335 / MC58).